The chain runs to 37 residues: MKVRPSVKTICDKCKIIKRKGKVMVICENPKHKQKQG.

It belongs to the bacterial ribosomal protein bL36 family.

The protein is Large ribosomal subunit protein bL36 of Heliobacterium modesticaldum (strain ATCC 51547 / Ice1).